A 197-amino-acid chain; its full sequence is ADP-ribosylation factor 1 (197 aa).

Gly-2 carries N-myristoyl glycine lipidation. GTP-binding positions include 24–31 (GLDAAGKT), 67–71 (DVGGQ), and 126–129 (NKQD).

Belongs to the small GTPase superfamily. Arf family.

Its subcellular location is the golgi apparatus. The catalysed reaction is GTP + H2O = GDP + phosphate + H(+). Its function is as follows. GTP-binding protein involved in protein trafficking; may modulate vesicle budding and uncoating within the Golgi apparatus. The polypeptide is ADP-ribosylation factor 1 (Solanum tuberosum (Potato)).